A 319-amino-acid polypeptide reads, in one-letter code: HTH-type transcriptional regulator YidZ (319 aa).

The HTH lysR-type domain occupies 8–65 (LDLNLLLCLQLLMQERSVTKAAKRMNVTPSAVSKSLSKLRTWFDDPLFVNTPLGLTPT). Residues 25-44 (VTKAAKRMNVTPSAVSKSLS) constitute a DNA-binding region (H-T-H motif).

Belongs to the LysR transcriptional regulatory family.

In terms of biological role, involved in anaerobic NO protection. This Citrobacter koseri (strain ATCC BAA-895 / CDC 4225-83 / SGSC4696) protein is HTH-type transcriptional regulator YidZ.